The sequence spans 114 residues: Large ribosomal subunit protein uL22 (114 aa).

It belongs to the universal ribosomal protein uL22 family. Part of the 50S ribosomal subunit.

In terms of biological role, this protein binds specifically to 23S rRNA; its binding is stimulated by other ribosomal proteins, e.g. L4, L17, and L20. It is important during the early stages of 50S assembly. It makes multiple contacts with different domains of the 23S rRNA in the assembled 50S subunit and ribosome. Functionally, the globular domain of the protein is located near the polypeptide exit tunnel on the outside of the subunit, while an extended beta-hairpin is found that lines the wall of the exit tunnel in the center of the 70S ribosome. The sequence is that of Large ribosomal subunit protein uL22 from Streptococcus pyogenes serotype M5 (strain Manfredo).